A 423-amino-acid polypeptide reads, in one-letter code: Histidine--tRNA ligase (423 aa).

Belongs to the class-II aminoacyl-tRNA synthetase family. As to quaternary structure, homodimer.

It is found in the cytoplasm. It carries out the reaction tRNA(His) + L-histidine + ATP = L-histidyl-tRNA(His) + AMP + diphosphate + H(+). This chain is Histidine--tRNA ligase, found in Haemophilus ducreyi (strain 35000HP / ATCC 700724).